The primary structure comprises 33 residues: Photosystem II reaction center protein Psb30 (33 aa).

The helical transmembrane segment at 5–25 (LIVQLTSLALITLAGPLIVAL) threads the bilayer.

This sequence belongs to the Psb30/Ycf12 family. PSII is composed of 1 copy each of membrane proteins PsbA, PsbB, PsbC, PsbD, PsbE, PsbF, PsbH, PsbI, PsbJ, PsbK, PsbL, PsbM, PsbT, PsbY, PsbZ, Psb30/Ycf12, peripheral proteins of the oxygen-evolving complex and a large number of cofactors. It forms dimeric complexes.

The protein resides in the plastid. It localises to the chloroplast thylakoid membrane. In terms of biological role, a core subunit of photosystem II (PSII), probably helps stabilize the reaction center. The polypeptide is Photosystem II reaction center protein Psb30 (Euglena sanguinea).